A 184-amino-acid chain; its full sequence is UPF0301 protein RHOS4_26140 (184 aa).

This sequence belongs to the UPF0301 (AlgH) family.

This chain is UPF0301 protein RHOS4_26140, found in Cereibacter sphaeroides (strain ATCC 17023 / DSM 158 / JCM 6121 / CCUG 31486 / LMG 2827 / NBRC 12203 / NCIMB 8253 / ATH 2.4.1.) (Rhodobacter sphaeroides).